The primary structure comprises 1220 residues: Plasma membrane calcium-transporting ATPase 3 (1220 aa).

Residues 1–20 show a composition bias toward polar residues; sequence MGDMANSSIEFHPKPQQQRD. The tract at residues 1–23 is disordered; that stretch reads MGDMANSSIEFHPKPQQQRDVPQ. Residues 1-97 lie on the Cytoplasmic side of the membrane; that stretch reads MGDMANSSIE…NFIPPKQPKT (97 aa). Ser-8 is subject to Phosphoserine. The helical transmembrane segment at 98 to 118 threads the bilayer; it reads FLQLVWEALQDVTLIILEVAA. The Extracellular segment spans residues 119–155; that stretch reads IVSLGLSFYAPPGEESEACGNVSGGAEDEGEAEAGWI. The helical transmembrane segment at 156-176 threads the bilayer; the sequence is EGAAILLSVICVVLVTAFNDW. At 177-364 the chain is on the cytoplasmic side; that stretch reads SKEKQFRGLQ…KEKSVLQGKL (188 aa). The tract at residues 298–355 is disordered; sequence EEEKKDKKGKQQDGAMESSQTKAKKQDGAVAMEMQPLKSAEGGEMEEREKKKANAPKK. Composition is skewed to basic and acidic residues over residues 299-308 and 342-355; these read EEKKDKKGKQ and MEEREKKKANAPKK. Residues 365–384 traverse the membrane as a helical segment; that stretch reads TKLAVQIGKAGLVMSAITVI. Over 385–417 the chain is Extracellular; the sequence is ILVLYFVIETFVVEGRTWLAECTPVYVQYFVKF. A helical membrane pass occupies residues 418–435; sequence FIIGVTVLVVAVPEGLPL. Residues 436–849 are Cytoplasmic-facing; the sequence is AVTISLAYSV…MWGRNVYDSI (414 aa). The 4-aspartylphosphate intermediate role is filled by Asp-473. Positions 794 and 798 each coordinate Mg(2+). A helical transmembrane segment spans residues 850-869; that stretch reads SKFLQFQLTVNVVAVIVAFT. Topologically, residues 870–879 are extracellular; that stretch reads GACITQDSPL. The chain crosses the membrane as a helical span at residues 880–900; that stretch reads KAVQMLWVNLIMDTFASLALA. The Cytoplasmic segment spans residues 901-920; it reads TEPPTESLLLRKPYGRDKPL. Residues 921–943 traverse the membrane as a helical segment; it reads ISRTMMKNILGHAVYQLAIIFTL. The Extracellular segment spans residues 944–961; sequence LFVGELFFDIDSGRNAPL. A helical membrane pass occupies residues 962–983; the sequence is HSPPSEHYTIIFNTFVMMQLFN. Over 984 to 1002 the chain is Cytoplasmic; sequence EINARKIHGERNVFDGIFS. The helical transmembrane segment at 1003–1024 threads the bilayer; the sequence is NPIFCTIVLGTFGIQIVIVQFG. Topologically, residues 1025–1034 are extracellular; sequence GKPFSCSPLS. Residues 1035-1056 form a helical membrane-spanning segment; the sequence is TEQWLWCLFVGVGELVWGQVIA. At 1057-1220 the chain is on the cytoplasmic side; the sequence is TIPTSQLKCL…SPLHSVETSL (164 aa). Thr-1079 is subject to Phosphothreonine. The segment at 1097-1114 is calmodulin-binding subdomain A; the sequence is LRRGQILWFRGLNRIQTQ. Residue Thr-1113 is modified to Phosphothreonine; by PKC. Residues 1115–1124 form a calmodulin-binding subdomain B region; the sequence is IRVVKAFRSS. Residues 1166–1186 are disordered; sequence ENEERLRAPPPPSPNQNNNAI.

This sequence belongs to the cation transport ATPase (P-type) (TC 3.A.3) family. Type IIB subfamily. Interacts with PDZD11. Interacts (via N-terminus) with YWHAE. As to expression, highly expressed in the cerebellum. Expressed in adrenal glands.

It is found in the cell membrane. The protein resides in the presynaptic cell membrane. The enzyme catalyses Ca(2+)(in) + ATP + H2O = Ca(2+)(out) + ADP + phosphate + H(+). Its activity is regulated as follows. Down-regulated by YWHAE. ATP-driven Ca(2+) ion pump involved in the maintenance of basal intracellular Ca(2+) levels at the presynaptic terminals. Uses ATP as an energy source to transport cytosolic Ca(2+) ions across the plasma membrane to the extracellular compartment. May counter-transport protons, but the mechanism and the stoichiometry of this Ca(2+)/H(+) exchange remains to be established. The chain is Plasma membrane calcium-transporting ATPase 3 from Homo sapiens (Human).